We begin with the raw amino-acid sequence, 475 residues long: Exodeoxyribonuclease 7 large subunit (475 aa).

A disordered region spans residues 452–475; that stretch reads DHGLNRSSKSKRIKSKQDDQGTLF. The segment covering 466–475 has biased composition (basic and acidic residues); the sequence is SKQDDQGTLF.

The protein belongs to the XseA family. In terms of assembly, heterooligomer composed of large and small subunits.

The protein resides in the cytoplasm. It carries out the reaction Exonucleolytic cleavage in either 5'- to 3'- or 3'- to 5'-direction to yield nucleoside 5'-phosphates.. Its function is as follows. Bidirectionally degrades single-stranded DNA into large acid-insoluble oligonucleotides, which are then degraded further into small acid-soluble oligonucleotides. In Bartonella quintana (strain Toulouse) (Rochalimaea quintana), this protein is Exodeoxyribonuclease 7 large subunit.